We begin with the raw amino-acid sequence, 70 residues long: Exodeoxyribonuclease 7 small subunit (70 aa).

It belongs to the XseB family. In terms of assembly, heterooligomer composed of large and small subunits.

It localises to the cytoplasm. The catalysed reaction is Exonucleolytic cleavage in either 5'- to 3'- or 3'- to 5'-direction to yield nucleoside 5'-phosphates.. In terms of biological role, bidirectionally degrades single-stranded DNA into large acid-insoluble oligonucleotides, which are then degraded further into small acid-soluble oligonucleotides. The polypeptide is Exodeoxyribonuclease 7 small subunit (Magnetococcus marinus (strain ATCC BAA-1437 / JCM 17883 / MC-1)).